Here is a 116-residue protein sequence, read N- to C-terminus: Large ribosomal subunit protein bL17 (116 aa).

It belongs to the bacterial ribosomal protein bL17 family. As to quaternary structure, part of the 50S ribosomal subunit. Contacts protein L32.

This Prochlorococcus marinus (strain MIT 9211) protein is Large ribosomal subunit protein bL17.